Reading from the N-terminus, the 135-residue chain is Ribosome-binding factor A (135 aa).

It belongs to the RbfA family. Monomer. Binds 30S ribosomal subunits, but not 50S ribosomal subunits or 70S ribosomes.

It is found in the cytoplasm. Its function is as follows. One of several proteins that assist in the late maturation steps of the functional core of the 30S ribosomal subunit. Associates with free 30S ribosomal subunits (but not with 30S subunits that are part of 70S ribosomes or polysomes). Required for efficient processing of 16S rRNA. May interact with the 5'-terminal helix region of 16S rRNA. This Hahella chejuensis (strain KCTC 2396) protein is Ribosome-binding factor A.